The sequence spans 1150 residues: Voltage-dependent calcium channel subunit alpha-2/delta-2 (1150 aa).

Residues 1–18 (MAVPARTCGASRPGPART) form the signal peptide. The interval 1 to 41 (MAVPARTCGASRPGPARTARPWPGCGPHPGPGTRRPTSGPP) is disordered. Over 19-1113 (ARPWPGCGPH…TEDTSDCGRG (1095 aa)) the chain is Extracellular. A VWFA domain is found at 291 to 469 (DMVIIVDVSG…INTQEYLDVL (179 aa)). A divalent metal cation is bound by residues aspartate 297, serine 299, and serine 301. Residues 297–301 (DVSGS) carry the MIDAS-like motif motif. 6 N-linked (GlcNAc...) asparagine glycosylation sites follow: asparagine 386, asparagine 418, asparagine 507, asparagine 540, asparagine 624, and asparagine 861. Cysteine 443 and cysteine 1098 are disulfide-bonded. The Cache domain occupies 485 to 574 (WTNVYEDALG…KPQTTNFREP (90 aa)). Residues 1114-1134 (ASFPPSLGVLVSLQLLLLLGL) traverse the membrane as a helical segment. The Cytoplasmic portion of the chain corresponds to 1135-1150 (PPRPQPQVLVHASRRL).

It belongs to the calcium channel subunit alpha-2/delta family. Dimer formed of alpha-2-2 and delta-2 chains; disulfide-linked. Voltage-dependent calcium channels are multisubunit complexes, consisting of alpha-1 (CACNA1), alpha-2 (CACNA2D), beta (CACNB) and delta (CACNA2D) subunits in a 1:1:1:1 ratio. Post-translationally, may be proteolytically processed into subunits alpha-2-2 and delta-2 that are disulfide-linked. It is however unclear whether such cleavage really takes place in vivo and has a functional role. In terms of tissue distribution, predominantly present in cerebellar cortex. Present in various lung tumor cell lines, while it is absent in normal lung (at protein level). Highly expressed in heart, lung, testis, pancreas and skeletal muscle. Also expressed in kidney, liver, placenta and brain.

The protein resides in the membrane. The alpha-2/delta subunit of voltage-dependent calcium channels regulates calcium current density and activation/inactivation kinetics of the calcium channel. Acts as a regulatory subunit for P/Q-type calcium channel (CACNA1A), N-type (CACNA1B), L-type (CACNA1C OR CACNA1D) and possibly T-type (CACNA1G). Overexpression induces apoptosis. This Homo sapiens (Human) protein is Voltage-dependent calcium channel subunit alpha-2/delta-2 (CACNA2D2).